Reading from the N-terminus, the 370-residue chain is Glucan endo-1,3-beta-glucosidase (370 aa).

The signal sequence occupies residues 1–32 (MASFFARTRRFSLVSLFLLELFTINLIPTTDA). Position 33 is a pyrrolidone carboxylic acid (Gln33). Catalysis depends on Glu127, which acts as the Proton donor. Glu272 acts as the Nucleophile in catalysis. A propeptide spans 348 to 370 (GERRDGEIVEGDFNGTVSLKSDM) (removed in mature form). The N-linked (GlcNAc...) asparagine glycan is linked to Asn361.

Belongs to the glycosyl hydrolase 17 family. In terms of tissue distribution, constitutively expressed in seedling roots.

The catalysed reaction is Hydrolysis of (1-&gt;3)-beta-D-glucosidic linkages in (1-&gt;3)-beta-D-glucans.. Functionally, implicated in the defense of plants against pathogens. The chain is Glucan endo-1,3-beta-glucosidase from Pisum sativum (Garden pea).